The chain runs to 396 residues: Putative carbamoyltransferase YgeW (396 aa).

Carbamoyl phosphate contacts are provided by residues 71–74 (STRT), Gln-98, 165–168 (HPTQ), and 330–331 (CL).

This sequence belongs to the aspartate/ornithine carbamoyltransferase superfamily. Homotrimer.

The chain is Putative carbamoyltransferase YgeW (ygeW) from Escherichia coli O157:H7.